Reading from the N-terminus, the 445-residue chain is Ribosomal protein uS12 methylthiotransferase RimO (445 aa).

The MTTase N-terminal domain maps to 6–121; sequence KKVAVVTLGC…ILETLEEAEK (116 aa). [4Fe-4S] cluster-binding residues include Cys-15, Cys-50, Cys-84, Cys-159, Cys-163, and Cys-166. The region spanning 145–375 is the Radical SAM core domain; that stretch reads LSPKQYAYVK…MELQHDIAYE (231 aa). The region spanning 378-445 is the TRAM domain; sequence QRWVGQTLKV…SYDLMGEVVQ (68 aa).

The protein belongs to the methylthiotransferase family. RimO subfamily. [4Fe-4S] cluster serves as cofactor.

It is found in the cytoplasm. It carries out the reaction L-aspartate(89)-[ribosomal protein uS12]-hydrogen + (sulfur carrier)-SH + AH2 + 2 S-adenosyl-L-methionine = 3-methylsulfanyl-L-aspartate(89)-[ribosomal protein uS12]-hydrogen + (sulfur carrier)-H + 5'-deoxyadenosine + L-methionine + A + S-adenosyl-L-homocysteine + 2 H(+). Catalyzes the methylthiolation of an aspartic acid residue of ribosomal protein uS12. This Desulfitobacterium hafniense (strain Y51) protein is Ribosomal protein uS12 methylthiotransferase RimO.